Reading from the N-terminus, the 240-residue chain is UDP-2,3-diacylglucosamine hydrolase (240 aa).

The Mn(2+) site is built by Asp8, His10, Asp41, Asn79, and His114. 79-80 (NR) contributes to the substrate binding site. Substrate-binding residues include Asp122, Ser160, Asn164, Lys167, and His195. Mn(2+)-binding residues include His195 and His197.

Belongs to the LpxH family. Requires Mn(2+) as cofactor.

The protein resides in the cell inner membrane. The enzyme catalyses UDP-2-N,3-O-bis[(3R)-3-hydroxytetradecanoyl]-alpha-D-glucosamine + H2O = 2-N,3-O-bis[(3R)-3-hydroxytetradecanoyl]-alpha-D-glucosaminyl 1-phosphate + UMP + 2 H(+). It participates in glycolipid biosynthesis; lipid IV(A) biosynthesis; lipid IV(A) from (3R)-3-hydroxytetradecanoyl-[acyl-carrier-protein] and UDP-N-acetyl-alpha-D-glucosamine: step 4/6. Functionally, hydrolyzes the pyrophosphate bond of UDP-2,3-diacylglucosamine to yield 2,3-diacylglucosamine 1-phosphate (lipid X) and UMP by catalyzing the attack of water at the alpha-P atom. Involved in the biosynthesis of lipid A, a phosphorylated glycolipid that anchors the lipopolysaccharide to the outer membrane of the cell. In Shigella boydii serotype 18 (strain CDC 3083-94 / BS512), this protein is UDP-2,3-diacylglucosamine hydrolase.